Consider the following 79-residue polypeptide: RNA-binding protein Hfq (79 aa).

One can recognise a Sm domain in the interval 10–69 (DPFLNALRKEHVPVSIYLVNGIKLQGNIESFDQYVVLLRNTVTQMVYKHAISTVVPARPV).

It belongs to the Hfq family. In terms of assembly, homohexamer.

RNA chaperone that binds small regulatory RNA (sRNAs) and mRNAs to facilitate mRNA translational regulation in response to envelope stress, environmental stress and changes in metabolite concentrations. Also binds with high specificity to tRNAs. The protein is RNA-binding protein Hfq of Burkholderia mallei (strain ATCC 23344).